We begin with the raw amino-acid sequence, 340 residues long: GTP 3',8-cyclase (340 aa).

Positions Lys-8–Asp-227 constitute a Radical SAM core domain. A GTP-binding site is contributed by Arg-17. Residues Cys-24 and Cys-28 each contribute to the [4Fe-4S] cluster site. Tyr-30 is an S-adenosyl-L-methionine binding site. Position 31 (Cys-31) interacts with [4Fe-4S] cluster. Arg-71 contributes to the GTP binding site. Gly-75 is an S-adenosyl-L-methionine binding site. Thr-102 contacts GTP. An S-adenosyl-L-methionine-binding site is contributed by Ser-126. Lys-163 is a GTP binding site. Position 197 (Met-197) interacts with S-adenosyl-L-methionine. Residues Cys-261 and Cys-264 each coordinate [4Fe-4S] cluster. Arg-266–Arg-268 is a binding site for GTP. A [4Fe-4S] cluster-binding site is contributed by Cys-278.

The protein belongs to the radical SAM superfamily. MoaA family. In terms of assembly, monomer and homodimer. It depends on [4Fe-4S] cluster as a cofactor.

The catalysed reaction is GTP + AH2 + S-adenosyl-L-methionine = (8S)-3',8-cyclo-7,8-dihydroguanosine 5'-triphosphate + 5'-deoxyadenosine + L-methionine + A + H(+). It functions in the pathway cofactor biosynthesis; molybdopterin biosynthesis. Its function is as follows. Catalyzes the cyclization of GTP to (8S)-3',8-cyclo-7,8-dihydroguanosine 5'-triphosphate. This Staphylococcus aureus (strain USA300) protein is GTP 3',8-cyclase.